The chain runs to 202 residues: Endothelin-1 (202 aa).

Positions 1 to 23 are cleaved as a signal peptide; sequence MDYFSMMVSLLLVAFHGAPETAA. Residues 24 to 49 are disordered; that stretch reads SGTELSTGAENPGEKPPASAPWRPRR. Positions 24 to 50 are excised as a propeptide; it reads SGTELSTGAENPGEKPPASAPWRPRRS. 2 disulfides stabilise this stretch: Cys53–Cys67 and Cys55–Cys63. A propeptide spanning residues 74–202 is cleaved from the precursor; that stretch reads VNTPGHIVPY…EQKVTHNRTH (129 aa). Residues 110–124 form an endothelin-like region; it reads CQCTSPHDKKCWNFC.

This sequence belongs to the endothelin/sarafotoxin family.

The protein resides in the secreted. Its function is as follows. Endothelins are endothelium-derived vasoconstrictor peptides. Probable ligand for G-protein coupled receptors EDNRA and EDNRB which activates PTK2B, BCAR1, BCAR3 and, GTPases RAP1 and RHOA cascade in glomerular mesangial cells. Also binds the DEAR/FBXW7-AS1 receptor. Promotes mesenteric arterial wall remodeling via activation of ROCK signaling and subsequent colocalization of NFATC3 with F-actin filaments. NFATC3 then translocates to the nucleus where it subsequently promotes the transcription of the smooth muscle hypertrophy and differentiation marker ACTA2. The protein is Endothelin-1 (EDN1) of Oryctolagus cuniculus (Rabbit).